The sequence spans 220 residues: Glutamine amidotransferase-like class 1 domain-containing protein 1 (220 aa).

Positions 1–38 (MASERLPNRPACLLVASGAAEGVSAQSFLHCFTMASTA) are cleaved as a signal peptide. Asn-201 carries N-linked (GlcNAc...) asparagine glycosylation.

This sequence belongs to the peptidase C56 family. Homotetramer. Component of the FERRY complex composed of five subunits, TBCK, PPP1R21, FERRY3, CRYZL1 and GATD1 with a ratio of 1:2:1:2:4, respectively.

Its subcellular location is the secreted. It localises to the early endosome. Functionally, component of the FERRY complex (Five-subunit Endosomal Rab5 and RNA/ribosome intermediary). The FERRY complex directly interacts with mRNAs and RAB5A, and functions as a RAB5A effector involved in the localization and the distribution of specific mRNAs most likely by mediating their endosomal transport. The complex recruits mRNAs and ribosomes to early endosomes through direct mRNA-interaction. This chain is Glutamine amidotransferase-like class 1 domain-containing protein 1, found in Homo sapiens (Human).